The chain runs to 562 residues: Urocanate hydratase (562 aa).

Residues 53 to 54 (GG), Gln131, 177 to 179 (GMG), Glu197, Arg202, 243 to 244 (NA), 268 to 272 (QTSAH), 278 to 279 (YL), and Tyr327 each bind NAD(+). The active site involves Cys415. Gly497 provides a ligand contact to NAD(+).

The protein belongs to the urocanase family. The cofactor is NAD(+).

Its subcellular location is the cytoplasm. It carries out the reaction 4-imidazolone-5-propanoate = trans-urocanate + H2O. It functions in the pathway amino-acid degradation; L-histidine degradation into L-glutamate; N-formimidoyl-L-glutamate from L-histidine: step 2/3. In terms of biological role, catalyzes the conversion of urocanate to 4-imidazolone-5-propionate. The chain is Urocanate hydratase from Chelativorans sp. (strain BNC1).